Consider the following 370-residue polypeptide: Aspartate beta-hydroxylase domain-containing protein 2 (370 aa).

Residues 1–57 (MVWALPRTSSPSCIAPSYKPDSGWIKMSAEWLIDWSCLLNGLRDLIAGCIQAVRDCN) lie on the Cytoplasmic side of the membrane. A helical membrane pass occupies residues 58 to 78 (SFALTTVICLLMLFAWYCYRV). The Lumenal segment spans residues 79–370 (GKDQPRSPFA…ALDSIFAPGR (292 aa)). N-linked (GlcNAc...) asparagine glycosylation occurs at asparagine 212. 2-oxoglutarate contacts are provided by tryptophan 229 and serine 273. Histidine 284 contacts Fe cation. 293–295 (RCH) contributes to the 2-oxoglutarate binding site. Residue histidine 329 coordinates Fe cation. Residue arginine 342 coordinates 2-oxoglutarate.

Belongs to the aspartyl/asparaginyl beta-hydroxylase family. Fe cation serves as cofactor.

The protein localises to the membrane. In terms of biological role, may function as 2-oxoglutarate-dependent dioxygenase. This Xenopus tropicalis (Western clawed frog) protein is Aspartate beta-hydroxylase domain-containing protein 2 (asphd2).